A 351-amino-acid chain; its full sequence is Glycerol-3-phosphate dehydrogenase 1-like protein (351 aa).

12–17 (GSGNWG) is an NAD(+) binding site. Lysine 122 lines the substrate pocket. Alanine 155 serves as a coordination point for NAD(+). Lysine 206 serves as the catalytic Proton acceptor. NAD(+) is bound by residues arginine 271, lysine 298, and glutamine 300. 271-272 (RN) is a binding site for substrate.

Belongs to the NAD-dependent glycerol-3-phosphate dehydrogenase family. As to quaternary structure, interacts with SCN5A.

It is found in the cytoplasm. It carries out the reaction sn-glycerol 3-phosphate + NAD(+) = dihydroxyacetone phosphate + NADH + H(+). Functionally, plays a role in regulating cardiac sodium current; decreased enzymatic activity with resulting increased levels of glycerol 3-phosphate activating the DPD1L-dependent SCN5A phosphorylation pathway, may ultimately lead to decreased sodium current; cardiac sodium current may also be reduced due to alterations of NAD(H) balance induced by DPD1L. The chain is Glycerol-3-phosphate dehydrogenase 1-like protein (Gpd1l) from Mus musculus (Mouse).